The sequence spans 415 residues: ORC1-type DNA replication protein 2 (415 aa).

ATP is bound by residues 69 to 73 (TGKSV), Tyr215, and Arg227.

It belongs to the CDC6/cdc18 family.

Involved in regulation of DNA replication. The chain is ORC1-type DNA replication protein 2 (cdc6-2) from Sulfolobus acidocaldarius (strain ATCC 33909 / DSM 639 / JCM 8929 / NBRC 15157 / NCIMB 11770).